The sequence spans 124 residues: MAIAKEDILAAVEGMTVLELNELVKAFEEKFGVSAAAVAVAGPAAGGAAAAAEEKTEFTVVLAEAGSNKVAVIKAVREITGLGLKEAKDLVDGAPKPVKEGVDKASADEAKKKLEDAGAKVELK.

Belongs to the bacterial ribosomal protein bL12 family. Homodimer. Part of the ribosomal stalk of the 50S ribosomal subunit. Forms a multimeric L10(L12)X complex, where L10 forms an elongated spine to which 2 to 4 L12 dimers bind in a sequential fashion. Binds GTP-bound translation factors.

Its function is as follows. Forms part of the ribosomal stalk which helps the ribosome interact with GTP-bound translation factors. Is thus essential for accurate translation. The protein is Large ribosomal subunit protein bL12 of Burkholderia mallei (strain NCTC 10247).